The following is a 268-amino-acid chain: L-aspartate dehydrogenase (268 aa).

NAD(+) contacts are provided by Ala-125 and Asn-191. His-221 is a catalytic residue.

It belongs to the L-aspartate dehydrogenase family.

It carries out the reaction L-aspartate + NADP(+) + H2O = oxaloacetate + NH4(+) + NADPH + H(+). The catalysed reaction is L-aspartate + NAD(+) + H2O = oxaloacetate + NH4(+) + NADH + H(+). The protein operates within cofactor biosynthesis; NAD(+) biosynthesis; iminoaspartate from L-aspartate (dehydrogenase route): step 1/1. In terms of biological role, specifically catalyzes the NAD or NADP-dependent dehydrogenation of L-aspartate to iminoaspartate. The sequence is that of L-aspartate dehydrogenase from Ralstonia nicotianae (strain ATCC BAA-1114 / GMI1000) (Ralstonia solanacearum).